The following is a 462-amino-acid chain: Cysteine--tRNA ligase (462 aa).

Position 24 (cysteine 24) interacts with Zn(2+). The short motif at 26-36 is the 'HIGH' region element; that stretch reads PTVYDDAHLGH. Zn(2+)-binding residues include cysteine 199, histidine 224, and glutamate 228. The short motif at 256-260 is the 'KMSKS' region element; it reads KMSKS. Lysine 259 lines the ATP pocket.

It belongs to the class-I aminoacyl-tRNA synthetase family. As to quaternary structure, monomer. Zn(2+) is required as a cofactor.

The protein resides in the cytoplasm. The enzyme catalyses tRNA(Cys) + L-cysteine + ATP = L-cysteinyl-tRNA(Cys) + AMP + diphosphate. The polypeptide is Cysteine--tRNA ligase (Campylobacter jejuni subsp. jejuni serotype O:6 (strain 81116 / NCTC 11828)).